The chain runs to 578 residues: Arginine--tRNA ligase (578 aa).

The 'HIGH' region motif lies at 127–137 (PNLAKEMHVGH).

This sequence belongs to the class-I aminoacyl-tRNA synthetase family. In terms of assembly, monomer.

The protein resides in the cytoplasm. It catalyses the reaction tRNA(Arg) + L-arginine + ATP = L-arginyl-tRNA(Arg) + AMP + diphosphate. The polypeptide is Arginine--tRNA ligase (Pseudomonas putida (strain GB-1)).